A 186-amino-acid polypeptide reads, in one-letter code: Large ribosomal subunit protein uL5 (186 aa).

The protein belongs to the universal ribosomal protein uL5 family. Part of the 50S ribosomal subunit; part of the 5S rRNA/L5/L18/L25 subcomplex. Contacts the 5S rRNA and the P site tRNA. Forms a bridge to the 30S subunit in the 70S ribosome.

Functionally, this is one of the proteins that bind and probably mediate the attachment of the 5S RNA into the large ribosomal subunit, where it forms part of the central protuberance. In the 70S ribosome it contacts protein S13 of the 30S subunit (bridge B1b), connecting the 2 subunits; this bridge is implicated in subunit movement. Contacts the P site tRNA; the 5S rRNA and some of its associated proteins might help stabilize positioning of ribosome-bound tRNAs. The sequence is that of Large ribosomal subunit protein uL5 from Phenylobacterium zucineum (strain HLK1).